Consider the following 352-residue polypeptide: Protein RecA (352 aa).

An ATP-binding site is contributed by 64-71 (GPESSGKT). A disordered region spans residues 328-352 (NPSSVPEAEAEHDPEQDEEPTFDLE). Residues 335 to 352 (AEAEHDPEQDEEPTFDLE) are compositionally biased toward acidic residues.

Belongs to the RecA family.

It localises to the cytoplasm. In terms of biological role, can catalyze the hydrolysis of ATP in the presence of single-stranded DNA, the ATP-dependent uptake of single-stranded DNA by duplex DNA, and the ATP-dependent hybridization of homologous single-stranded DNAs. It interacts with LexA causing its activation and leading to its autocatalytic cleavage. This chain is Protein RecA, found in Brevibacillus brevis (strain 47 / JCM 6285 / NBRC 100599).